The following is a 209-amino-acid chain: Large ribosomal subunit protein uL3 (209 aa).

The interval Asn-127–Met-166 is disordered.

It belongs to the universal ribosomal protein uL3 family. Part of the 50S ribosomal subunit. Forms a cluster with proteins L14 and L19.

Its function is as follows. One of the primary rRNA binding proteins, it binds directly near the 3'-end of the 23S rRNA, where it nucleates assembly of the 50S subunit. In Chlorobaculum tepidum (strain ATCC 49652 / DSM 12025 / NBRC 103806 / TLS) (Chlorobium tepidum), this protein is Large ribosomal subunit protein uL3.